A 217-amino-acid polypeptide reads, in one-letter code: Large ribosomal subunit protein uL1 (217 aa).

It belongs to the universal ribosomal protein uL1 family.

The protein is Large ribosomal subunit protein uL1 (RPL10A) of Candida glabrata (strain ATCC 2001 / BCRC 20586 / JCM 3761 / NBRC 0622 / NRRL Y-65 / CBS 138) (Yeast).